We begin with the raw amino-acid sequence, 138 residues long: Augmin complex subunit msd1 (138 aa).

In terms of assembly, component of the augmin complex composed of dgt2, dgt3, dgt4, dgt5, dgt6, msd1, msd5 and wac. The complex interacts directly or indirectly with microtubules and is required for centrosome-independent generation of spindle microtubules.

It is found in the cytoplasm. It localises to the cytoskeleton. The protein resides in the spindle. Its function is as follows. As part of the augmin complex, plays a role in centrosome-independent generation of spindle microtubules. The complex is required for mitotic spindle assembly through its involvement in localizing gamma-tubulin to spindle microtubules. msd1 is required for microtubule nucleation from within the mitotic spindle and for localization of Grip71 to centrosomes and mitotic spindle. The polypeptide is Augmin complex subunit msd1 (Drosophila melanogaster (Fruit fly)).